We begin with the raw amino-acid sequence, 167 residues long: Small ribosomal subunit protein uS5 (167 aa).

The S5 DRBM domain maps to 11 to 74 (LQEKLIAVNR…DKARRNMTTI (64 aa)).

It belongs to the universal ribosomal protein uS5 family. As to quaternary structure, part of the 30S ribosomal subunit. Contacts proteins S4 and S8.

With S4 and S12 plays an important role in translational accuracy. Functionally, located at the back of the 30S subunit body where it stabilizes the conformation of the head with respect to the body. The protein is Small ribosomal subunit protein uS5 of Baumannia cicadellinicola subsp. Homalodisca coagulata.